The primary structure comprises 221 residues: uncharacterized protein (221 aa).

The 44-residue stretch at 20–63 (DFDRAMLDFQAMFPSLSNSHIEYVLRKYDGDVSATINELLYDNT) folds into the CUE domain. The interval 131–194 (EEKKKKSCSD…GPYIGEGEVK (64 aa)) is disordered. The span at 156-166 (KNSKNSKISVN) shows a compositional bias: low complexity. A compositionally biased stretch (basic and acidic residues) spans 169–183 (KKLEPRRRSDEDRVP).

This is an uncharacterized protein from Caenorhabditis elegans.